The sequence spans 177 residues: tRNA (cytidine(56)-2'-O)-methyltransferase (177 aa).

Residues Leu84 and 109-113 (GAEKV) contribute to the S-adenosyl-L-methionine site.

It belongs to the aTrm56 family. In terms of assembly, homodimer.

Its subcellular location is the cytoplasm. It carries out the reaction cytidine(56) in tRNA + S-adenosyl-L-methionine = 2'-O-methylcytidine(56) in tRNA + S-adenosyl-L-homocysteine + H(+). Specifically catalyzes the AdoMet-dependent 2'-O-ribose methylation of cytidine at position 56 in tRNAs. The polypeptide is tRNA (cytidine(56)-2'-O)-methyltransferase (Methanosarcina barkeri (strain Fusaro / DSM 804)).